A 272-amino-acid chain; its full sequence is Putative MgpC-like protein MPN_366 (272 aa).

Disordered stretches follow at residues 65–84 (QESQ…TSGS) and 171–196 (GSGQ…PMPS). Positions 72–84 (NGSQSGSSDTSGS) are enriched in low complexity. Polar residues predominate over residues 173–187 (GQESSWNSQRSQKGL).

This sequence belongs to the MgpC family.

The polypeptide is Putative MgpC-like protein MPN_366 (Mycoplasma pneumoniae (strain ATCC 29342 / M129 / Subtype 1) (Mycoplasmoides pneumoniae)).